We begin with the raw amino-acid sequence, 530 residues long: Light-independent protochlorophyllide reductase subunit B (530 aa).

Aspartate 36 is a binding site for [4Fe-4S] cluster. The Proton donor role is filled by aspartate 290. 425-426 is a binding site for substrate; it reads GL.

The protein belongs to the ChlB/BchB/BchZ family. In terms of assembly, protochlorophyllide reductase is composed of three subunits; ChlL, ChlN and ChlB. Forms a heterotetramer of two ChlB and two ChlN subunits. [4Fe-4S] cluster is required as a cofactor.

It carries out the reaction chlorophyllide a + oxidized 2[4Fe-4S]-[ferredoxin] + 2 ADP + 2 phosphate = protochlorophyllide a + reduced 2[4Fe-4S]-[ferredoxin] + 2 ATP + 2 H2O. It participates in porphyrin-containing compound metabolism; chlorophyll biosynthesis (light-independent). Functionally, component of the dark-operative protochlorophyllide reductase (DPOR) that uses Mg-ATP and reduced ferredoxin to reduce ring D of protochlorophyllide (Pchlide) to form chlorophyllide a (Chlide). This reaction is light-independent. The NB-protein (ChlN-ChlB) is the catalytic component of the complex. The polypeptide is Light-independent protochlorophyllide reductase subunit B (Synechococcus sp. (strain WH7803)).